The primary structure comprises 620 residues: uncharacterized protein (620 aa).

A run of 4 helical transmembrane segments spans residues 66 to 86, 238 to 258, 546 to 566, and 584 to 604; these read LLNFSDFVSGAGIDTVFNQII, FFDALFVMLLLVCHLNKNLLW, LGIISAVVFGIVEFFNCVWTI, and IIFISIGTILVLFLLVTILVF.

It localises to the cell membrane. This is an uncharacterized protein from Mycoplasma genitalium (strain ATCC 33530 / DSM 19775 / NCTC 10195 / G37) (Mycoplasmoides genitalium).